Consider the following 210-residue polypeptide: Small ribosomal subunit protein uS7 (210 aa).

Belongs to the universal ribosomal protein uS7 family. As to quaternary structure, component of the small ribosomal subunit. Part of the small subunit (SSU) processome, composed of more than 70 proteins and the RNA chaperone small nucleolar RNA (snoRNA) U3.

It localises to the cytoplasm. The protein resides in the nucleus. It is found in the nucleolus. Its function is as follows. Component of the small ribosomal subunit. The ribosome is a large ribonucleoprotein complex responsible for the synthesis of proteins in the cell. Part of the small subunit (SSU) processome, first precursor of the small eukaryotic ribosomal subunit. During the assembly of the SSU processome in the nucleolus, many ribosome biogenesis factors, an RNA chaperone and ribosomal proteins associate with the nascent pre-rRNA and work in concert to generate RNA folding, modifications, rearrangements and cleavage as well as targeted degradation of pre-ribosomal RNA by the RNA exosome. The sequence is that of Small ribosomal subunit protein uS7 (rps-5) from Caenorhabditis elegans.